A 422-amino-acid polypeptide reads, in one-letter code: Phosphoglycerate kinase (422 aa).

Substrate-binding positions include 24–26, 64–67, Arg129, and Arg171; these read DLN and HLGR. ATP contacts are provided by residues Lys222, Gly309, Glu340, and 370 to 373; that span reads DIDT.

It belongs to the phosphoglycerate kinase family. Monomer.

It localises to the cytoplasm. It catalyses the reaction (2R)-3-phosphoglycerate + ATP = (2R)-3-phospho-glyceroyl phosphate + ADP. Its pathway is carbohydrate degradation; glycolysis; pyruvate from D-glyceraldehyde 3-phosphate: step 2/5. This chain is Phosphoglycerate kinase (pgk), found in Ureaplasma parvum serovar 3 (strain ATCC 700970).